The chain runs to 182 residues: NADH-quinone oxidoreductase subunit I (182 aa).

4Fe-4S ferredoxin-type domains are found at residues 52 to 82 (LTRDPDGEERCVACNLCAVACPVGCISLQKA) and 92 to 121 (DFFRINFSRCIFCGLCEEACPTTAIQLTPD). 8 residues coordinate [4Fe-4S] cluster: Cys-62, Cys-65, Cys-68, Cys-72, Cys-101, Cys-104, Cys-107, and Cys-111.

This sequence belongs to the complex I 23 kDa subunit family. As to quaternary structure, NDH-1 is composed of 13 different subunits. Subunits NuoA, H, J, K, L, M, N constitute the membrane sector of the complex. The cofactor is [4Fe-4S] cluster.

The protein localises to the cell inner membrane. It carries out the reaction a quinone + NADH + 5 H(+)(in) = a quinol + NAD(+) + 4 H(+)(out). NDH-1 shuttles electrons from NADH, via FMN and iron-sulfur (Fe-S) centers, to quinones in the respiratory chain. The immediate electron acceptor for the enzyme in this species is believed to be ubiquinone. Couples the redox reaction to proton translocation (for every two electrons transferred, four hydrogen ions are translocated across the cytoplasmic membrane), and thus conserves the redox energy in a proton gradient. This is NADH-quinone oxidoreductase subunit I from Pseudomonas savastanoi pv. phaseolicola (strain 1448A / Race 6) (Pseudomonas syringae pv. phaseolicola (strain 1448A / Race 6)).